We begin with the raw amino-acid sequence, 173 residues long: Pyridoxal 5'-phosphate synthase subunit PdxT (173 aa).

49–51 lines the L-glutamine pocket; the sequence is GES. The active-site Nucleophile is the Cys-81. L-glutamine is bound by residues Arg-113 and 141–142; that span reads IR.

This sequence belongs to the glutaminase PdxT/SNO family. In the presence of PdxS, forms a dodecamer of heterodimers. Only shows activity in the heterodimer.

The catalysed reaction is aldehydo-D-ribose 5-phosphate + D-glyceraldehyde 3-phosphate + L-glutamine = pyridoxal 5'-phosphate + L-glutamate + phosphate + 3 H2O + H(+). It carries out the reaction L-glutamine + H2O = L-glutamate + NH4(+). It functions in the pathway cofactor biosynthesis; pyridoxal 5'-phosphate biosynthesis. Catalyzes the hydrolysis of glutamine to glutamate and ammonia as part of the biosynthesis of pyridoxal 5'-phosphate. The resulting ammonia molecule is channeled to the active site of PdxS. The sequence is that of Pyridoxal 5'-phosphate synthase subunit PdxT from Mycolicibacterium paratuberculosis (strain ATCC BAA-968 / K-10) (Mycobacterium paratuberculosis).